Consider the following 184-residue polypeptide: Leucine-rich repeat-containing protein 20 (184 aa).

LRR repeat units lie at residues 23-44 (GSDTLDLADCKLVSFPICIYKV), 51-72 (QIHLITLANNELKSLTSKFMTT), 75-96 (QLRELRLEGNYLFRLPNEVSSL), 98-120 (HLRAIDLSRNQFQDFPEQLTTLP), 121-141 (ALETINLEENEIVDVPVEKLA), and 145-167 (ALRVINLRLNPLSADVRVIAPPL). The residue at position 175 (Ser175) is a Phosphoserine.

This Mus musculus (Mouse) protein is Leucine-rich repeat-containing protein 20 (Lrrc20).